The chain runs to 405 residues: Nuclear hormone receptor family member nhr-199 (405 aa).

The segment at residues 20–111 (IPYCLICSEV…MGMQRSSVQQ (92 aa)) is a DNA-binding region (nuclear receptor). NR C4-type zinc fingers lie at residues 23–44 (CLIC…CRAC) and 60–94 (CGRN…CKAC). In terms of domain architecture, NR LBD spans 126-376 (RGKPVLNKLR…PFSRIHGNQK (251 aa)).

It belongs to the nuclear hormone receptor family.

Its subcellular location is the nucleus. Functionally, orphan nuclear receptor. This chain is Nuclear hormone receptor family member nhr-199 (nhr-199), found in Caenorhabditis elegans.